Reading from the N-terminus, the 317-residue chain is Putative ribose-phosphate pyrophosphokinase (317 aa).

The segment at 211–224 (GRDVIVLDDEIAKG) is binding of phosphoribosylpyrophosphate.

The protein belongs to the ribose-phosphate pyrophosphokinase family.

It catalyses the reaction D-ribose 5-phosphate + ATP = 5-phospho-alpha-D-ribose 1-diphosphate + AMP + H(+). The chain is Putative ribose-phosphate pyrophosphokinase from Streptomyces coelicolor (strain ATCC BAA-471 / A3(2) / M145).